Here is a 93-residue protein sequence, read N- to C-terminus: SH3 domain-binding glutamic acid-rich-like protein 3 (93 aa).

An N-acetylserine modification is found at S2. One can recognise a Glutaredoxin domain in the interval 2-93 (SGLRVYSTSV…NTLQEFLKLA (92 aa)). The O-linked (GalNAc...) threonine glycan is linked to T9.

Belongs to the SH3BGR family. As to quaternary structure, homodimer. Interacts with MYO1C (via its IQ motifs); the interaction is dependent on calcium and takes place at membrane ruffles. Post-translationally, may be glycosylated.

It localises to the cytoplasm. The protein localises to the cytosol. The protein resides in the cell projection. It is found in the ruffle membrane. Its subcellular location is the nucleus. Could act as a modulator of glutaredoxin biological activity. May play a role in cytoskeleton organization. The sequence is that of SH3 domain-binding glutamic acid-rich-like protein 3 (SH3BGRL3) from Bos taurus (Bovine).